Here is a 371-residue protein sequence, read N- to C-terminus: Cytochrome b (371 aa).

4 helical membrane-spanning segments follow: residues 25 to 45, 69 to 90, 105 to 125, and 170 to 190; these read FGSM…FLAV, WMMQ…YIHI, WMSG…GYVL, and FFAL…LHII. H75 and H89 together coordinate heme b. Positions 174 and 188 each coordinate heme b. H193 is an a ubiquinone binding site. 4 helical membrane passes run 218-238, 280-300, 312-332, and 339-358; these read HKDL…MSFF, LGGA…PFTH, LSQL…WAAT, and FIII…LSFP.

This sequence belongs to the cytochrome b family. As to quaternary structure, the cytochrome bc1 complex contains 3 respiratory subunits (MT-CYB, CYC1 and UQCRFS1), 2 core proteins (UQCRC1 and UQCRC2) and probably 6 low-molecular weight proteins. Heme b is required as a cofactor.

The protein resides in the mitochondrion inner membrane. In terms of biological role, component of the ubiquinol-cytochrome c reductase complex (complex III or cytochrome b-c1 complex) that is part of the mitochondrial respiratory chain. The b-c1 complex mediates electron transfer from ubiquinol to cytochrome c. Contributes to the generation of a proton gradient across the mitochondrial membrane that is then used for ATP synthesis. The sequence is that of Cytochrome b (MT-CYB) from Apodora papuana (Papuan olive python).